The chain runs to 238 residues: 1-(5-phosphoribosyl)-5-[(5-phosphoribosylamino)methylideneamino] imidazole-4-carboxamide isomerase (238 aa).

The Proton acceptor role is filled by D8. D129 functions as the Proton donor in the catalytic mechanism.

This sequence belongs to the HisA/HisF family.

Its subcellular location is the cytoplasm. The catalysed reaction is 1-(5-phospho-beta-D-ribosyl)-5-[(5-phospho-beta-D-ribosylamino)methylideneamino]imidazole-4-carboxamide = 5-[(5-phospho-1-deoxy-D-ribulos-1-ylimino)methylamino]-1-(5-phospho-beta-D-ribosyl)imidazole-4-carboxamide. It functions in the pathway amino-acid biosynthesis; L-histidine biosynthesis; L-histidine from 5-phospho-alpha-D-ribose 1-diphosphate: step 4/9. The chain is 1-(5-phosphoribosyl)-5-[(5-phosphoribosylamino)methylideneamino] imidazole-4-carboxamide isomerase from Anaeromyxobacter dehalogenans (strain 2CP-1 / ATCC BAA-258).